We begin with the raw amino-acid sequence, 212 residues long: Large ribosomal subunit protein uL3 (212 aa).

The tract at residues 136-155 (THGNSLSHRSNGSIGQNQTP) is disordered. N5-methylglutamine is present on glutamine 153.

This sequence belongs to the universal ribosomal protein uL3 family. In terms of assembly, part of the 50S ribosomal subunit. Forms a cluster with proteins L14 and L19. In terms of processing, methylated by PrmB.

Functionally, one of the primary rRNA binding proteins, it binds directly near the 3'-end of the 23S rRNA, where it nucleates assembly of the 50S subunit. This Shewanella baltica (strain OS223) protein is Large ribosomal subunit protein uL3.